We begin with the raw amino-acid sequence, 684 residues long: Probable potassium transport system protein Kup (684 aa).

12 helical membrane passes run Ala19–Met39, Val61–Leu81, Trp104–Pro124, Gln151–Thr171, Ala177–Leu197, Met223–Ser243, Leu255–Leu275, Leu303–Gly323, Leu352–Phe372, Ala381–Leu401, Pro407–Ile427, and Phe433–Val453.

This sequence belongs to the HAK/KUP transporter (TC 2.A.72) family.

It is found in the cell membrane. It carries out the reaction K(+)(in) + H(+)(in) = K(+)(out) + H(+)(out). Functionally, transport of potassium into the cell. Likely operates as a K(+):H(+) symporter. This Lacticaseibacillus paracasei (strain ATCC 334 / BCRC 17002 / CCUG 31169 / CIP 107868 / KCTC 3260 / NRRL B-441) (Lactobacillus paracasei) protein is Probable potassium transport system protein Kup.